The sequence spans 305 residues: UDP-3-O-acyl-N-acetylglucosamine deacetylase (305 aa).

Positions 79, 238, and 242 each coordinate Zn(2+). The Proton donor role is filled by His-265.

It belongs to the LpxC family. Zn(2+) serves as cofactor.

It carries out the reaction a UDP-3-O-[(3R)-3-hydroxyacyl]-N-acetyl-alpha-D-glucosamine + H2O = a UDP-3-O-[(3R)-3-hydroxyacyl]-alpha-D-glucosamine + acetate. It participates in glycolipid biosynthesis; lipid IV(A) biosynthesis; lipid IV(A) from (3R)-3-hydroxytetradecanoyl-[acyl-carrier-protein] and UDP-N-acetyl-alpha-D-glucosamine: step 2/6. Functionally, catalyzes the hydrolysis of UDP-3-O-myristoyl-N-acetylglucosamine to form UDP-3-O-myristoylglucosamine and acetate, the committed step in lipid A biosynthesis. The protein is UDP-3-O-acyl-N-acetylglucosamine deacetylase of Enterobacter sp. (strain 638).